The sequence spans 377 residues: Anhydro-N-acetylmuramic acid kinase (377 aa).

14 to 21 (GTSLDGVD) serves as a coordination point for ATP.

The protein belongs to the anhydro-N-acetylmuramic acid kinase family.

The enzyme catalyses 1,6-anhydro-N-acetyl-beta-muramate + ATP + H2O = N-acetyl-D-muramate 6-phosphate + ADP + H(+). It participates in amino-sugar metabolism; 1,6-anhydro-N-acetylmuramate degradation. It functions in the pathway cell wall biogenesis; peptidoglycan recycling. In terms of biological role, catalyzes the specific phosphorylation of 1,6-anhydro-N-acetylmuramic acid (anhMurNAc) with the simultaneous cleavage of the 1,6-anhydro ring, generating MurNAc-6-P. Is required for the utilization of anhMurNAc either imported from the medium or derived from its own cell wall murein, and thus plays a role in cell wall recycling. This chain is Anhydro-N-acetylmuramic acid kinase, found in Pasteurella multocida (strain Pm70).